Here is a 125-residue protein sequence, read N- to C-terminus: Fluoride-specific ion channel FluC (125 aa).

Transmembrane regions (helical) follow at residues 1–21, 32–52, 68–88, and 101–121; these read MIQA…RYYV, AFPW…GVFA, LLIT…LDAI, and IYIA…LAVM. Na(+) is bound by residues Gly-75 and Thr-78.

Belongs to the fluoride channel Fluc/FEX (TC 1.A.43) family.

The protein resides in the cell inner membrane. The enzyme catalyses fluoride(in) = fluoride(out). With respect to regulation, na(+) is not transported, but it plays an essential structural role and its presence is essential for fluoride channel function. Fluoride-specific ion channel. Important for reducing fluoride concentration in the cell, thus reducing its toxicity. This is Fluoride-specific ion channel FluC from Rhizobium johnstonii (strain DSM 114642 / LMG 32736 / 3841) (Rhizobium leguminosarum bv. viciae).